Here is a 367-residue protein sequence, read N- to C-terminus: Cell division protein FtsZ (367 aa).

GTP contacts are provided by residues 17-21, 104-106, Glu135, Lys139, and Asp183; these read GGGSN and GTG.

It belongs to the FtsZ family. As to quaternary structure, homodimer. Polymerizes to form a dynamic ring structure in a strictly GTP-dependent manner. Interacts directly with several other division proteins.

It is found in the cytoplasm. In terms of biological role, essential cell division protein that forms a contractile ring structure (Z ring) at the future cell division site. The regulation of the ring assembly controls the timing and the location of cell division. One of the functions of the FtsZ ring is to recruit other cell division proteins to the septum to produce a new cell wall between the dividing cells. Binds GTP and shows GTPase activity. This Aquifex aeolicus (strain VF5) protein is Cell division protein FtsZ.